Reading from the N-terminus, the 374-residue chain is Queuine tRNA-ribosyltransferase (374 aa).

Residue D89 is the Proton acceptor of the active site. Residues 89–93 (DSGGF), D143, Q187, and G214 each bind substrate. The segment at 245–251 (GVGKPED) is RNA binding. The Nucleophile role is filled by D264. Residues 269 to 273 (TRNAR) are RNA binding; important for wobble base 34 recognition. Zn(2+) contacts are provided by C302, C304, C307, and H333.

The protein belongs to the queuine tRNA-ribosyltransferase family. Homodimer. Within each dimer, one monomer is responsible for RNA recognition and catalysis, while the other monomer binds to the replacement base PreQ1. It depends on Zn(2+) as a cofactor.

The enzyme catalyses 7-aminomethyl-7-carbaguanine + guanosine(34) in tRNA = 7-aminomethyl-7-carbaguanosine(34) in tRNA + guanine. Its pathway is tRNA modification; tRNA-queuosine biosynthesis. In terms of biological role, catalyzes the base-exchange of a guanine (G) residue with the queuine precursor 7-aminomethyl-7-deazaguanine (PreQ1) at position 34 (anticodon wobble position) in tRNAs with GU(N) anticodons (tRNA-Asp, -Asn, -His and -Tyr). Catalysis occurs through a double-displacement mechanism. The nucleophile active site attacks the C1' of nucleotide 34 to detach the guanine base from the RNA, forming a covalent enzyme-RNA intermediate. The proton acceptor active site deprotonates the incoming PreQ1, allowing a nucleophilic attack on the C1' of the ribose to form the product. After dissociation, two additional enzymatic reactions on the tRNA convert PreQ1 to queuine (Q), resulting in the hypermodified nucleoside queuosine (7-(((4,5-cis-dihydroxy-2-cyclopenten-1-yl)amino)methyl)-7-deazaguanosine). In Shewanella frigidimarina (strain NCIMB 400), this protein is Queuine tRNA-ribosyltransferase.